The primary structure comprises 495 residues: Trigger factor (495 aa).

The 82-residue stretch at aspartate 162–proline 243 folds into the PPIase FKBP-type domain. Residues aspartate 425 to phenylalanine 437 show a composition bias toward basic and acidic residues. Positions aspartate 425–lysine 495 are disordered. The segment covering serine 450 to alanine 461 has biased composition (low complexity). Acidic residues predominate over residues threonine 486–lysine 495.

It belongs to the FKBP-type PPIase family. Tig subfamily.

The protein localises to the cytoplasm. The enzyme catalyses [protein]-peptidylproline (omega=180) = [protein]-peptidylproline (omega=0). Involved in protein export. Acts as a chaperone by maintaining the newly synthesized protein in an open conformation. Functions as a peptidyl-prolyl cis-trans isomerase. This is Trigger factor from Corynebacterium kroppenstedtii (strain DSM 44385 / JCM 11950 / CIP 105744 / CCUG 35717).